Reading from the N-terminus, the 3527-residue chain is BEACH domain-containing protein A2 (3527 aa).

Disordered regions lie at residues 25–46 (AGEAISDPTTPPSSSQASPSSS), 385–423 (SSPHKNRGSNDSKKQPPLSLKTRQNDDSEKQQSLSLNSR), and 454–490 (ESSGTSTSLLSQTKLTGYSRRQTPSANNRYDEPCEQG). Residues 28–46 (AISDPTTPPSSSQASPSSS) show a composition bias toward low complexity. Over residues 455-469 (SSGTSTSLLSQTKLT) the composition is skewed to low complexity. Residues 472–481 (SRRQTPSANN) are compositionally biased toward polar residues. LRR repeat units lie at residues 1447-1470 (KLESGQTTISMSPTEIIPENNYED), 1499-1522 (FSHLSELEMGDNPVETSNCIVLSN), 1542-1565 (SIQIASLGFLENLISILWYRSHNL), 1566-1588 (AILRQINLVKHLLVTLQRGDVEV), and 2001-2024 (SSEMKSLDLTGSSSQVQPIDSRSS). Disordered stretches follow at residues 1992-2023 (GDHVGSVSASSEMKSLDLTGSSSQVQPIDSRS) and 2046-2081 (IPSPSKSSTISTPHPSHISVSEFDASSDQSSGSQGS). The span at 1998-2020 (VSASSEMKSLDLTGSSSQVQPID) shows a compositional bias: polar residues. LRR repeat units follow at residues 2128 to 2151 (TEQIKAVQALESILEMLPLYVDPE), 2221 to 2247 (LLSILQLANKDGRVEEVTSSGKGLLSI), and 2313 to 2336 (VSAVLQLLVANKNIILCPSNLDTD). A disordered region spans residues 2658–2680 (VNTDEKSETGSPIKSSSGKMDEI). A compositionally biased stretch (polar residues) spans 2666–2675 (TGSPIKSSSG). Positions 2704–2871 (EHLEKIRFRY…EREEVFRNLL (168 aa)) constitute a BEACH-type PH domain. The BEACH domain occupies 2896–3188 (GSRLFKLMAK…QLFQKPHVKR (293 aa)). WD repeat units lie at residues 3272–3311 (HEGNQIQCAGVSHDGRIVVTGAEDGLVSVWRVSKDGPRGS), 3322–3361 (AHTAKVICLRVSQPYMMIASSSDDCTVIIWDLSSLSFVRQ), 3410–3451 (DLIV…DPVS), and 3483–3522 (FHKQPVTSLHLTTDLKQLLSGDSAGHLLSWTVPDEILKAS).

In Arabidopsis thaliana (Mouse-ear cress), this protein is BEACH domain-containing protein A2.